Consider the following 229-residue polypeptide: Artemin (229 aa).

Ala1 carries the post-translational modification N-acetylalanine. A Ferritin-like diiron domain is found at 25-173 (HNFDPECEKA…DCLSNLHCIG (149 aa)).

This sequence belongs to the ferritin family.

The sequence is that of Artemin from Artemia salina (Brine shrimp).